We begin with the raw amino-acid sequence, 351 residues long: Glycerol-3-phosphate dehydrogenase [NAD(P)+] (351 aa).

Residues Ser12, Trp13, His33, and Lys114 each contribute to the NADPH site. 3 residues coordinate sn-glycerol 3-phosphate: Lys114, Gly145, and Ser147. Ala149 lines the NADPH pocket. Lys200, Asp253, Ser263, Arg264, and Asn265 together coordinate sn-glycerol 3-phosphate. Lys200 acts as the Proton acceptor in catalysis. Arg264 serves as a coordination point for NADPH. Positions 288 and 290 each coordinate NADPH.

This sequence belongs to the NAD-dependent glycerol-3-phosphate dehydrogenase family.

The protein localises to the cytoplasm. It catalyses the reaction sn-glycerol 3-phosphate + NAD(+) = dihydroxyacetone phosphate + NADH + H(+). The enzyme catalyses sn-glycerol 3-phosphate + NADP(+) = dihydroxyacetone phosphate + NADPH + H(+). Its pathway is membrane lipid metabolism; glycerophospholipid metabolism. Functionally, catalyzes the reduction of the glycolytic intermediate dihydroxyacetone phosphate (DHAP) to sn-glycerol 3-phosphate (G3P), the key precursor for phospholipid synthesis. The polypeptide is Glycerol-3-phosphate dehydrogenase [NAD(P)+] (Lacticaseibacillus casei (strain BL23) (Lactobacillus casei)).